The sequence spans 319 residues: Acetyl-coenzyme A carboxylase carboxyl transferase subunit alpha (319 aa).

Residues 35 to 296 enclose the CoA carboxyltransferase C-terminal domain; the sequence is NLDEEVQRLR…KAQLLADLLD (262 aa).

Belongs to the AccA family. As to quaternary structure, acetyl-CoA carboxylase is a heterohexamer composed of biotin carboxyl carrier protein (AccB), biotin carboxylase (AccC) and two subunits each of ACCase subunit alpha (AccA) and ACCase subunit beta (AccD).

It is found in the cytoplasm. It carries out the reaction N(6)-carboxybiotinyl-L-lysyl-[protein] + acetyl-CoA = N(6)-biotinyl-L-lysyl-[protein] + malonyl-CoA. It functions in the pathway lipid metabolism; malonyl-CoA biosynthesis; malonyl-CoA from acetyl-CoA: step 1/1. Component of the acetyl coenzyme A carboxylase (ACC) complex. First, biotin carboxylase catalyzes the carboxylation of biotin on its carrier protein (BCCP) and then the CO(2) group is transferred by the carboxyltransferase to acetyl-CoA to form malonyl-CoA. This chain is Acetyl-coenzyme A carboxylase carboxyl transferase subunit alpha, found in Pectobacterium atrosepticum (strain SCRI 1043 / ATCC BAA-672) (Erwinia carotovora subsp. atroseptica).